A 65-amino-acid polypeptide reads, in one-letter code: Small, acid-soluble spore protein 2 (65 aa).

This sequence belongs to the alpha/beta-type SASP family.

SASP are bound to spore DNA. They are double-stranded DNA-binding proteins that cause DNA to change to an a-like conformation. They protect the DNA backbone from chemical and enzymatic cleavage and are thus involved in dormant spore's high resistance to UV light. The protein is Small, acid-soluble spore protein 2 (sasP-2) of Bacillus cereus.